We begin with the raw amino-acid sequence, 173 residues long: Small ribosomal subunit protein uS9 (173 aa).

A compositionally biased stretch (polar residues) spans 1 to 15; the sequence is MTDTPTENLENTEVT. Disordered stretches follow at residues 1 to 26 and 135 to 173; these read MTDT…EIAY and EASR…YSKR. The span at 154-173 shows a compositional bias: basic residues; sequence KERKKAGLKKARKAPQYSKR.

Belongs to the universal ribosomal protein uS9 family.

This Cutibacterium acnes (strain DSM 16379 / KPA171202) (Propionibacterium acnes) protein is Small ribosomal subunit protein uS9.